Consider the following 760-residue polypeptide: 5-methyltetrahydropteroyltriglutamate--homocysteine methyltransferase (760 aa).

5-methyltetrahydropteroyltri-L-glutamate contacts are provided by residues 15 to 18 (RELK) and Lys114. L-homocysteine is bound by residues 436–438 (IGS) and Glu489. Residues 436–438 (IGS) and Glu489 contribute to the L-methionine site. Residues 520–521 (RC) and Trp566 contribute to the 5-methyltetrahydropteroyltri-L-glutamate site. Residue Asp604 coordinates L-homocysteine. Asp604 contacts L-methionine. Glu610 contributes to the 5-methyltetrahydropteroyltri-L-glutamate binding site. Zn(2+) contacts are provided by His646, Cys648, and Glu670. The active-site Proton donor is His699. Residue Cys731 participates in Zn(2+) binding.

It belongs to the vitamin-B12 independent methionine synthase family. Zn(2+) serves as cofactor.

The catalysed reaction is 5-methyltetrahydropteroyltri-L-glutamate + L-homocysteine = tetrahydropteroyltri-L-glutamate + L-methionine. The protein operates within amino-acid biosynthesis; L-methionine biosynthesis via de novo pathway; L-methionine from L-homocysteine (MetE route): step 1/1. Catalyzes the transfer of a methyl group from 5-methyltetrahydrofolate to homocysteine resulting in methionine formation. This Shewanella oneidensis (strain ATCC 700550 / JCM 31522 / CIP 106686 / LMG 19005 / NCIMB 14063 / MR-1) protein is 5-methyltetrahydropteroyltriglutamate--homocysteine methyltransferase.